We begin with the raw amino-acid sequence, 375 residues long: MAQLCVALVAGEASGDILGSGLMRALKARHPDVRFIGVGGPLMEAEGLQSYFPMERLAVMGLVEVLGRLRELLKRRKLLIQTLIEEKPDVFIGIDAPDFTLNIELKLRQAGIKTVHYVSPSVWAWRQKRVLKIREGCDLMLTLLPFEARFYEEQGVPVRFVGHPLADTIPLEADRPAARAALGLGEGPVVALMPGSRGGEVGRLGALFLDAAERLCQQVPGVRFVLPCANATRRAQIEQMLEGRQLPLTLLDGQSHQALAACDAVLIASGTATLEALLYKRPMVVAYRLAPLTFWILKRLVKSPYVSLPNLLAQRELVPELLQDDATSEALANTLAPLVRDGSQQTERFDEIHRTLRRDASNQAAEAVLALLKDR.

This sequence belongs to the LpxB family.

It carries out the reaction a lipid X + a UDP-2-N,3-O-bis[(3R)-3-hydroxyacyl]-alpha-D-glucosamine = a lipid A disaccharide + UDP + H(+). Its pathway is bacterial outer membrane biogenesis; LPS lipid A biosynthesis. Functionally, condensation of UDP-2,3-diacylglucosamine and 2,3-diacylglucosamine-1-phosphate to form lipid A disaccharide, a precursor of lipid A, a phosphorylated glycolipid that anchors the lipopolysaccharide to the outer membrane of the cell. The sequence is that of Lipid-A-disaccharide synthase from Pseudomonas putida (strain ATCC 700007 / DSM 6899 / JCM 31910 / BCRC 17059 / LMG 24140 / F1).